The sequence spans 151 residues: SsrA-binding protein (151 aa).

The protein belongs to the SmpB family.

The protein resides in the cytoplasm. Its function is as follows. Required for rescue of stalled ribosomes mediated by trans-translation. Binds to transfer-messenger RNA (tmRNA), required for stable association of tmRNA with ribosomes. tmRNA and SmpB together mimic tRNA shape, replacing the anticodon stem-loop with SmpB. tmRNA is encoded by the ssrA gene; the 2 termini fold to resemble tRNA(Ala) and it encodes a 'tag peptide', a short internal open reading frame. During trans-translation Ala-aminoacylated tmRNA acts like a tRNA, entering the A-site of stalled ribosomes, displacing the stalled mRNA. The ribosome then switches to translate the ORF on the tmRNA; the nascent peptide is terminated with the 'tag peptide' encoded by the tmRNA and targeted for degradation. The ribosome is freed to recommence translation, which seems to be the essential function of trans-translation. This Chlamydia pneumoniae (Chlamydophila pneumoniae) protein is SsrA-binding protein.